A 187-amino-acid chain; its full sequence is Large ribosomal subunit protein uL5 (187 aa).

This sequence belongs to the universal ribosomal protein uL5 family. As to quaternary structure, part of the 50S ribosomal subunit; part of the 5S rRNA/L5/L18/L25 subcomplex. Contacts the 5S rRNA and the P site tRNA. Forms a bridge to the 30S subunit in the 70S ribosome.

This is one of the proteins that bind and probably mediate the attachment of the 5S RNA into the large ribosomal subunit, where it forms part of the central protuberance. In the 70S ribosome it contacts protein S13 of the 30S subunit (bridge B1b), connecting the 2 subunits; this bridge is implicated in subunit movement. Contacts the P site tRNA; the 5S rRNA and some of its associated proteins might help stabilize positioning of ribosome-bound tRNAs. The sequence is that of Large ribosomal subunit protein uL5 from Mycobacterium avium (strain 104).